Reading from the N-terminus, the 295-residue chain is Trimeric intracellular cation channel type A (295 aa).

Residues 1–18 are Lumenal-facing; that stretch reads MELLSALSLDDLAASFSK. The chain crosses the membrane as a helical span at residues 19–39; sequence LPVFPLFDVAYYIISILYLKY. Residues 40-51 lie on the Cytoplasmic side of the membrane; sequence EPGAVDLSKRSP. A helical membrane pass occupies residues 52 to 72; the sequence is VASWLCAMLYCFGSYILADVL. At 73–84 the chain is on the lumenal side; it reads LGESPIHYFSNN. A Ca(2+)-binding site is contributed by glycine 74. Residues 85 to 105 traverse the membrane as a helical segment; that stretch reads ANILLASAVWYLTFFCPLNIF. Topologically, residues 106–144 are cytoplasmic; that stretch reads YKIVSFLPVKLVLVGMKEVVRVRKIAMGIHHAHHHYHHG. A 1,2-diacyl-sn-glycero-3-phospho-(1D-myo-inositol-4,5-bisphosphate) is bound by residues lysine 122 and arginine 126. Residues 145 to 165 form a helical membrane-spanning segment; that stretch reads WVIMVLIGWVKGSGVALMSNL. At 166–178 the chain is on the lumenal side; the sequence is EQLLRGVWKPETN. Residues 179-199 traverse the membrane as a helical segment; that stretch reads EILHMSFPTKASLYGAILFTL. At 200-201 the chain is on the cytoplasmic side; sequence QQ. Residues 202–222 form a helical membrane-spanning segment; it reads AHWLPISKAYLIFFFTLFMAV. Residues 223–233 lie on the Lumenal side of the membrane; that stretch reads CKIYMTATHSH. A helical transmembrane segment spans residues 234–254; sequence GSPFAIFESGICYVLFAAANG. The Cytoplasmic portion of the chain corresponds to 255–295; the sequence is DHDDHGNHHHHHDDHDVSHSAGKSKEEHNEGTRKRKTKKAE. Residues 258–295 form a disordered region; sequence DHGNHHHHHDDHDVSHSAGKSKEEHNEGTRKRKTKKAE. Residues 267–286 show a composition bias toward basic and acidic residues; that stretch reads DDHDVSHSAGKSKEEHNEGT.

It belongs to the TMEM38 family. Homotrimer; conformation seems to be controled by binding to diacylglycerol (DAG).

The protein resides in the sarcoplasmic reticulum membrane. It localises to the nucleus membrane. The enzyme catalyses K(+)(in) = K(+)(out). Its activity is regulated as follows. Channel activity is activated by a change of voltage within the sarcoplasmic reticulum lumen and blocked by luminal high Ca(2+) levels. Functionally, intracellular monovalent cation channel required for maintenance of rapid intracellular calcium release. Acts as a potassium counter-ion channel that functions in synchronization with calcium release from intracellular stores. Opened by a change of voltage within the sarcoplasmic reticulum lumen. The polypeptide is Trimeric intracellular cation channel type A (tmem38a) (Xenopus laevis (African clawed frog)).